A 238-amino-acid chain; its full sequence is Pyridoxine 5'-phosphate synthase (238 aa).

Asn-7 is a 3-amino-2-oxopropyl phosphate binding site. 9–10 contacts 1-deoxy-D-xylulose 5-phosphate; it reads DH. Arg-18 is a binding site for 3-amino-2-oxopropyl phosphate. The active-site Proton acceptor is His-43. The 1-deoxy-D-xylulose 5-phosphate site is built by Arg-45 and His-50. Glu-70 functions as the Proton acceptor in the catalytic mechanism. Thr-100 serves as a coordination point for 1-deoxy-D-xylulose 5-phosphate. His-190 acts as the Proton donor in catalysis. 3-amino-2-oxopropyl phosphate-binding positions include Gly-191 and 212–213; that span reads GH.

Belongs to the PNP synthase family. Homooctamer; tetramer of dimers.

The protein resides in the cytoplasm. The enzyme catalyses 3-amino-2-oxopropyl phosphate + 1-deoxy-D-xylulose 5-phosphate = pyridoxine 5'-phosphate + phosphate + 2 H2O + H(+). Its pathway is cofactor biosynthesis; pyridoxine 5'-phosphate biosynthesis; pyridoxine 5'-phosphate from D-erythrose 4-phosphate: step 5/5. In terms of biological role, catalyzes the complicated ring closure reaction between the two acyclic compounds 1-deoxy-D-xylulose-5-phosphate (DXP) and 3-amino-2-oxopropyl phosphate (1-amino-acetone-3-phosphate or AAP) to form pyridoxine 5'-phosphate (PNP) and inorganic phosphate. This is Pyridoxine 5'-phosphate synthase from Prochlorococcus marinus (strain MIT 9515).